Here is a 359-residue protein sequence, read N- to C-terminus: MQNNKIIVGISGGVDSSVSALLLKQQGYDVTGVFMKNWEEDDTDEFCSAEQHIADAQAVCDSIGIPFKKINFAAEYWDNVFEHFLTEYKAGRTPNPDILCNKEIKFKAFLSYVHLLGGDYIATGHYARTKVIDDGSVQLVKGLDDSKDQTYFLYTLGQEQLKQTMFPIGDIEKSRVREIAKENNLVTFDKKDSTGICFIGERKFKDFLSKFLPAQKGEIHDENGIKIGMHDGLMYYTIGQRQGLGIGGVKNRPEIPWFAAQKDLENNVLIAVQGHDHPMLFKDTLQAIDLSWVAGSAPADSFRCSAKVRYRQKDQPCSVEVNNDGSVNVVFDEPQRAITPGQSVVFYDNDVCLGGGIII.

ATP is bound by residues 9 to 16 and Met35; that span reads GISGGVDS. Residues 95–97 form an interaction with target base in tRNA region; sequence NPD. The active-site Nucleophile is Cys100. Cys100 and Cys197 are disulfide-bonded. Gly124 lines the ATP pocket. Residues 147-149 are interaction with tRNA; it reads KDQ. Catalysis depends on Cys197, which acts as the Cysteine persulfide intermediate. The segment at 309–310 is interaction with tRNA; sequence RY.

This sequence belongs to the MnmA/TRMU family.

The protein localises to the cytoplasm. It carries out the reaction S-sulfanyl-L-cysteinyl-[protein] + uridine(34) in tRNA + AH2 + ATP = 2-thiouridine(34) in tRNA + L-cysteinyl-[protein] + A + AMP + diphosphate + H(+). Catalyzes the 2-thiolation of uridine at the wobble position (U34) of tRNA, leading to the formation of s(2)U34. The polypeptide is tRNA-specific 2-thiouridylase MnmA (Francisella philomiragia subsp. philomiragia (strain ATCC 25017 / CCUG 19701 / FSC 153 / O#319-036)).